Here is a 135-residue protein sequence, read N- to C-terminus: ATP synthase epsilon chain (135 aa).

The protein belongs to the ATPase epsilon chain family. As to quaternary structure, F-type ATPases have 2 components, CF(1) - the catalytic core - and CF(0) - the membrane proton channel. CF(1) has five subunits: alpha(3), beta(3), gamma(1), delta(1), epsilon(1). CF(0) has three main subunits: a, b and c.

It is found in the cell inner membrane. Produces ATP from ADP in the presence of a proton gradient across the membrane. In Rhodopseudomonas palustris (strain BisA53), this protein is ATP synthase epsilon chain.